Consider the following 87-residue polypeptide: Large ribosomal subunit protein eL33 (87 aa).

Belongs to the eukaryotic ribosomal protein eL33 family.

The protein is Large ribosomal subunit protein eL33 of Pyrococcus abyssi (strain GE5 / Orsay).